The following is a 284-amino-acid chain: Protein SIC1 (284 aa).

Positions 1-89 are disordered; sequence MTPSTPPRSR…SPFPKSSVKR (89 aa). Thr-5 is subject to Phosphothreonine; by PHO85. Polar residues-rich tracts occupy residues 18–52 and 61–79; these read PSGN…TKSF and PNSN…SPQR. Thr-33 is subject to Phosphothreonine. Ser-76 carries the phosphoserine modification. A Phosphothreonine modification is found at Thr-173. 2 positions are modified to phosphoserine: Ser-198 and Ser-201. 3 positions are modified to lysine derivative: Lys-268, Lys-272, and Lys-274.

As to quaternary structure, interacts with HOG1. In terms of processing, phosphorylated by cyclin-dependent kinases CDC28 and PHO85 in association with G1-cyclins, promoting degradation of SIC1 and exit form G1. May contain a covalently attached chromophore. Post-translationally, the N-terminus is blocked.

Its subcellular location is the cytoplasm. It localises to the nucleus. In terms of biological role, substrate and inhibitor of the cyclin-dependent protein kinase CDC28. Its activity could be important for faithful segregation of chromosomes to daughter cells. It acts in response to a signal from a post-start checkpoint. The chain is Protein SIC1 (SIC1) from Saccharomyces cerevisiae (strain ATCC 204508 / S288c) (Baker's yeast).